The primary structure comprises 182 residues: Ribosome maturation factor RimM (182 aa).

In terms of domain architecture, PRC barrel spans 103 to 182 (EDDYYWKDLM…RVEVDWDPGF (80 aa)).

The protein belongs to the RimM family. Binds ribosomal protein uS19.

It is found in the cytoplasm. In terms of biological role, an accessory protein needed during the final step in the assembly of 30S ribosomal subunit, possibly for assembly of the head region. Essential for efficient processing of 16S rRNA. May be needed both before and after RbfA during the maturation of 16S rRNA. It has affinity for free ribosomal 30S subunits but not for 70S ribosomes. The sequence is that of Ribosome maturation factor RimM from Yersinia pestis bv. Antiqua (strain Antiqua).